Consider the following 25-residue polypeptide: Histone H4 (25 aa).

The span at 1-14 shows a compositional bias: gly residues; sequence MSGRGKGGKGLGKG. The tract at residues 1–25 is disordered; it reads MSGRGKGGKGLGKGGAKRHRKVLRD. Residue Ser-2 is modified to N-acetylserine. N6-acetyllysine occurs at positions 6, 9, 13, 17, and 21. Over residues 15–25 the composition is skewed to basic residues; that stretch reads GAKRHRKVLRD. Residues 17–21 mediate DNA binding; it reads KRHRK.

This sequence belongs to the histone H4 family. The nucleosome is a histone octamer containing two molecules each of H2A, H2B, H3 and H4 assembled in one H3-H4 heterotetramer and two H2A-H2B heterodimers. The octamer wraps approximately 147 bp of DNA.

Its subcellular location is the nucleus. It localises to the chromosome. Functionally, core component of nucleosome. Nucleosomes wrap and compact DNA into chromatin, limiting DNA accessibility to the cellular machineries which require DNA as a template. Histones thereby play a central role in transcription regulation, DNA repair, DNA replication and chromosomal stability. DNA accessibility is regulated via a complex set of post-translational modifications of histones, also called histone code, and nucleosome remodeling. This is Histone H4 from Medicago sativa (Alfalfa).